The primary structure comprises 26 residues: Acyl carrier protein (26 aa).

Residues Ser-2–Glu-26 form the Carrier domain.

It belongs to the acyl carrier protein (ACP) family. In terms of processing, 4'-phosphopantetheine is transferred from CoA to a specific serine of apo-ACP by AcpS. This modification is essential for activity because fatty acids are bound in thioester linkage to the sulfhydryl of the prosthetic group.

It is found in the cytoplasm. It participates in lipid metabolism; fatty acid biosynthesis. Its function is as follows. Carrier of the growing fatty acid chain in fatty acid biosynthesis. The polypeptide is Acyl carrier protein (acpP) (Erythrobacter longus).